Reading from the N-terminus, the 157-residue chain is Probable succinate transporter subunit YjjB (157 aa).

Helical transmembrane passes span 8 to 28 (LALA…AMVF), 50 to 70 (MILM…SMLV), 87 to 107 (VFTV…TAMI), and 129 to 149 (FLTA…PGLW).

It belongs to the ThrE exporter (TC 2.A.79) family. In terms of assembly, the transporter is composed of YjjB and YjjP.

Its subcellular location is the cell inner membrane. Involved in succinate export with YjjP. Both proteins are required for export. The polypeptide is Probable succinate transporter subunit YjjB (Escherichia coli O1:K1 / APEC).